The chain runs to 201 residues: 3-isopropylmalate dehydratase small subunit (201 aa).

This sequence belongs to the LeuD family. LeuD type 1 subfamily. In terms of assembly, heterodimer of LeuC and LeuD.

The enzyme catalyses (2R,3S)-3-isopropylmalate = (2S)-2-isopropylmalate. It functions in the pathway amino-acid biosynthesis; L-leucine biosynthesis; L-leucine from 3-methyl-2-oxobutanoate: step 2/4. Catalyzes the isomerization between 2-isopropylmalate and 3-isopropylmalate, via the formation of 2-isopropylmaleate. This Glaesserella parasuis serovar 5 (strain SH0165) (Haemophilus parasuis) protein is 3-isopropylmalate dehydratase small subunit.